Here is a 417-residue protein sequence, read N- to C-terminus: D-amino acid dehydrogenase (417 aa).

An FAD-binding site is contributed by 3–17 (IVVLGGGVVGVTSAW).

It belongs to the DadA oxidoreductase family. FAD serves as cofactor.

The enzyme catalyses a D-alpha-amino acid + A + H2O = a 2-oxocarboxylate + AH2 + NH4(+). It participates in amino-acid degradation; D-alanine degradation; NH(3) and pyruvate from D-alanine: step 1/1. In terms of biological role, oxidative deamination of D-amino acids. This chain is D-amino acid dehydrogenase, found in Aeromonas hydrophila subsp. hydrophila (strain ATCC 7966 / DSM 30187 / BCRC 13018 / CCUG 14551 / JCM 1027 / KCTC 2358 / NCIMB 9240 / NCTC 8049).